The following is a 790-amino-acid chain: GATOR2 complex protein WDR24 (790 aa).

WD repeat units follow at residues 72 to 112 (SLNL…RNKQ), 118 to 158 (EHKR…SVST), 161 to 201 (GQSE…RCER), 205 to 245 (AHNG…AKEM), 249 to 291 (QTIA…VPAA), and 295 to 338 (EHRD…VERA). Serine 155 carries the phosphoserine; by AMPK modification. 2 positions are modified to phosphoserine: serine 470 and serine 496. Threonine 581 carries the phosphothreonine modification. A phosphoserine mark is found at serine 594 and serine 598. The segment at 718 to 740 (NCSHCKRPMSSRGWVCDRCHRCA) adopts a C4-type zinc-finger fold. Zn(2+)-binding residues include cysteine 719, cysteine 722, cysteine 733, cysteine 736, cysteine 743, cysteine 746, cysteine 757, cysteine 760, histidine 762, histidine 765, histidine 768, cysteine 779, cysteine 783, histidine 785, and cysteine 787. The segment at 741–790 (SMCAVCHHVVKGLFVWCQGCSHGGHLQHIMKWLEGSSHCPAGCGHLCEYS) adopts an RING-type; atypical zinc-finger fold.

The protein belongs to the WD repeat WDR24 family. Component of the GATOR2 subcomplex, composed of MIOS, SEC13, SEH1L, WDR24 and WDR59. The GATOR2 complex interacts with CASTOR1 and CASTOR2; the interaction is negatively regulated by arginine. The GATOR2 complex interacts with SESN1, SESN2 and SESN3; the interaction is negatively regulated by amino acids. SESN1, SESN2 and SESN3 convey leucine availability via direct interaction with SEH1L and WDR24. Post-translationally, phosphorylation at Ser-155 by AMPK in response to glucose deprivation inactivates WDR24 by promoting interaction with 14-3-3 proteins, such as YWHAG, preventing assembly of the GATOR2 complex. Autoubiquitinated; MIOS is required to prevent autoubiquitination.

The protein resides in the lysosome membrane. It carries out the reaction S-ubiquitinyl-[E2 ubiquitin-conjugating enzyme]-L-cysteine + [acceptor protein]-L-lysine = [E2 ubiquitin-conjugating enzyme]-L-cysteine + N(6)-ubiquitinyl-[acceptor protein]-L-lysine.. It functions in the pathway protein modification; protein ubiquitination. The GATOR2 complex is negatively regulated by the upstream amino acid sensors CASTOR1 and SESN2, which sequester the GATOR2 complex in absence of amino acids. In the presence of abundant amino acids, GATOR2 is released from CASTOR1 and SESN2 and activated. Its function is as follows. Catalytic component of the GATOR2 complex, a multiprotein complex that acts as an activator of the amino acid-sensing branch of the mTORC1 signaling pathway. The GATOR2 complex indirectly activates mTORC1 through the inhibition of the GATOR1 subcomplex. GATOR2 probably acts as an E3 ubiquitin-protein ligase toward GATOR1. In the presence of abundant amino acids, the GATOR2 complex mediates ubiquitination of the NPRL2 core component of the GATOR1 complex, leading to GATOR1 inactivation. In the absence of amino acids, GATOR2 is inhibited, activating the GATOR1 complex. In addition to its role in regulation of the mTORC1 complex, promotes the acidification of lysosomes and facilitates autophagic flux. Within the GATOR2 complex, WDR24 constitutes the catalytic subunit that mediates 'Lys-6'-linked ubiquitination of NPRL2. This Homo sapiens (Human) protein is GATOR2 complex protein WDR24.